The chain runs to 144 residues: Ribonuclease H (144 aa).

Residues 1 to 141 (MDKIDIYSDG…ADALANRGVE (141 aa)) form the RNase H type-1 domain. Residues Asp-9, Glu-47, Asp-69, and Asp-133 each contribute to the Mg(2+) site.

It belongs to the RNase H family. As to quaternary structure, monomer. It depends on Mg(2+) as a cofactor.

It is found in the cytoplasm. The enzyme catalyses Endonucleolytic cleavage to 5'-phosphomonoester.. Endonuclease that specifically degrades the RNA of RNA-DNA hybrids. This is Ribonuclease H from Janthinobacterium sp. (strain Marseille) (Minibacterium massiliensis).